We begin with the raw amino-acid sequence, 318 residues long: Phospholipid scramblase 1 (318 aa).

Polar residues predominate over residues Met-1 to Glu-14. Residues Met-1–Pro-64 are disordered. The proline-rich domain (PRD) stretch occupies residues Met-1–Pro-84. Residues Met-1 to Lys-288 are Cytoplasmic-facing. An SH3-binding 1 motif is present at residues Pro-18–Pro-26. 2 consecutive short sequence motifs (PPXY motif) follow at residues Pro-22–Tyr-25 and Pro-33–Tyr-36. Over residues Gln-31–Val-44 the composition is skewed to low complexity. An SH3-binding 2 motif is present at residues Pro-42 to Pro-50. Phosphotyrosine; by ABL is present on residues Tyr-69 and Tyr-74. Positions Pro-84–Pro-92 match the SH3-binding 3 motif. The segment at Leu-99 to Lys-290 is interaction with hepatitis C virus E2 glycoprotein. Residue Thr-161 is modified to Phosphothreonine; by PKC/PRKCD. Residues Cys-184, Cys-185, Cys-186, Cys-188, and Cys-189 are each lipidated (S-palmitoyl cysteine). Residues Gly-257 to Ile-266 carry the Nuclear localization signal motif. The chain crosses the membrane as a helical span at residues Met-289–Phe-305. The Extracellular segment spans residues Glu-306–Trp-318.

It belongs to the phospholipid scramblase family. Forms homooligomers in the presence of calcium. Interacts with ABL. Interacts with RELT, RELL1 and RELL2. Interacts with OXSR1 in the presence of RELT. Interacts with TOP2A and TOP2B. Interacts with OCLN. Interacts with TRPC5. Interacts with TRPC1 and TRPC4. Interacts with ILDR1. In terms of assembly, (Microbial infection) Interacts with hepatitis C virus E1 and E2 glycoproteins. As to quaternary structure, (Microbial infection) Interacts with T-cell leukemia virus (HTLV)-1 protein Tax (via N-terminus); this interaction represses Tax homodimerization. (Microbial infection) Interacts with HIV-1 protein Tat; this interaction represses the Tat-dependent transactivation of the HIV-1 long terminal repeat (LTR) and reduces the nuclear translocation of Tat. In terms of assembly, (Microbial infection) Interacts with hepatitis B virus protein HBx; this interaction promotes the proteasomal degradation of HBx. As to quaternary structure, (Microbial infection) Interacts with human cytomegalovirus proteins IE1 and IE2. (Microbial infection) Interacts with Epstein Barr virus (EBV) lytic switch protein BZLF1; this interaction negatively regulates the transcriptional regulatory activity of BZLF1 by preventing the formation of the BZLF1-CBP complex. In terms of assembly, (Microbial infection) Interacts with influenza virus nucleoprotein NP. Ca(2+) serves as cofactor. The cofactor is Mg(2+). Requires Zn(2+) as cofactor. In terms of processing, phosphorylation at Thr-161 by PKC/PKCD increases its phospholipid scramblase activity during both cell stimulation and apoptosis. Phosphorylated by OXSR1 in the presence of RELT. Palmitoylation is required for its phospholipid scramblase activity. Palmitoylation regulates its localization to the cell membrane or the nucleus; trafficking to the cell membrane is dependent upon palmitoylation whereas in the absence of palmitoylation, localizes to the nucleus. As to expression, expressed in platelets, erythrocyte membranes, lymphocytes, spleen, thymus, prostate, testis, uterus, intestine, colon, heart, placenta, lung, liver, kidney and pancreas. Not detected in brain and skeletal muscle.

It localises to the cell membrane. It is found in the nucleus. Its subcellular location is the cytoplasm. The protein localises to the perinuclear region. The enzyme catalyses a 1,2-diacyl-sn-glycero-3-phosphocholine(in) = a 1,2-diacyl-sn-glycero-3-phosphocholine(out). It catalyses the reaction a 1,2-diacyl-sn-glycero-3-phosphoethanolamine(in) = a 1,2-diacyl-sn-glycero-3-phosphoethanolamine(out). It carries out the reaction a 1,2-diacyl-sn-glycero-3-phospho-L-serine(in) = a 1,2-diacyl-sn-glycero-3-phospho-L-serine(out). With respect to regulation, activated by Pb(2+) and Hg(2+) ions. Phosphorylation at Thr-161 by PKC/PKCD increases its phospholipid scramblase activity during both cell stimulation and apoptosis. Its function is as follows. Catalyzes calcium-induced ATP-independent rapid bidirectional and non-specific movement of phospholipids (lipid scrambling or lipid flip-flop) between the inner and outer leaflet of the plasma membrane resulting in collapse of the phospholipid asymmetry which leads to phosphatidylserine externalization on the cell surface. Mediates calcium-dependent phosphatidylserine externalization and apoptosis in neurons via its association with TRPC5. Also exhibits magnesium-dependent nuclease activity against double-stranded DNA and RNA but not single-stranded DNA and can enhance DNA decatenation mediated by TOP2A. Negatively regulates FcR-mediated phagocytosis in differentiated macrophages. May contribute to cytokine-regulated cell proliferation and differentiation. May play a role in the antiviral response of interferon (IFN) by amplifying and enhancing the IFN response through increased expression of select subset of potent antiviral genes. Inhibits the functions of viral transactivators, including human T-cell leukemia virus (HTLV)-1 protein Tax, human immunodeficiency virus (HIV)-1 Tat, human hepatitis B virus (HBV) HBx, Epstein-Barr virus (EBV) BZLF1 and human cytomegalovirus IE1 and IE2 proteins through direct interactions. Also mediates the inhibition of influenza virus infection by preventing nuclear import of the viral nucleoprotein/NP. Plays a crucial role as a defense factor against SARS-CoV-2 independently of its scramblase activity by directly targeting nascent viral vesicles to prevent virus-membrane fusion and the release of viral RNA into the host-cell cytosol. Functionally, (Microbial infection) Acts as an attachment receptor for HCV. This Homo sapiens (Human) protein is Phospholipid scramblase 1 (PLSCR1).